Here is a 334-residue protein sequence, read N- to C-terminus: MASQASLKLQPSNQSQQAPPNITSCEGAPEAWDLLCRVLPGFVITVCFFGLLGNLLVLSFFLLPWRRWWQQRRQRLTIAEIYLANLAASDLVFVLGLPFWAENVGNRFNWPFGSDLCRVVSGVIKANLFISIFLVVAISQDRYRLLVYPMTSWGNRRRRQAQVTCLLIWVAGGLLSTPTFLLRSVKVVPDLNISACILLFPHEAWHFVRMVELNVLGFLLPLAAILYFNFHILASLRGQKEASRTRCGGPKDSKTMGLILTLVASFLVCWAPYHFFAFLDFLVQVRVIQDCFWKELTDLGLQLANFFAFVNSCLNPLIYVFAGRLFKTRVLGTL.

The disordered stretch occupies residues Met1 to Asn21. At Met1 to Gly41 the chain is on the extracellular side. Positions Gln10–Asn21 are enriched in low complexity. Residues Asn13 and Asn21 are each glycosylated (N-linked (GlcNAc...) asparagine). The chain crosses the membrane as a helical span at residues Phe42 to Leu62. The Cytoplasmic portion of the chain corresponds to Leu63–Glu80. The helical transmembrane segment at Ile81–Ala101 threads the bilayer. The Extracellular segment spans residues Glu102 to Arg118. Residues Cys117 and Cys196 are joined by a disulfide bond. The chain crosses the membrane as a helical span at residues Val119–Ser139. Residues Gln140 to Ala161 lie on the Cytoplasmic side of the membrane. Residues Gln162–Leu182 traverse the membrane as a helical segment. Topologically, residues Arg183–Asn214 are extracellular. Asn192 is a glycosylation site (N-linked (GlcNAc...) asparagine). A helical membrane pass occupies residues Val215 to Ser235. The Cytoplasmic portion of the chain corresponds to Leu236 to Leu258. A helical membrane pass occupies residues Ile259 to Leu279. Residues Asp280–Gln302 are Extracellular-facing. Residues Leu303–Gly323 form a helical membrane-spanning segment. Residues Arg324–Leu334 are Cytoplasmic-facing.

The protein belongs to the G-protein coupled receptor 1 family. Bradykinin receptor subfamily. BDKRB1 sub-subfamily. As to expression, expressed in heart, liver and lung.

Its subcellular location is the cell membrane. In terms of biological role, this is a receptor for bradykinin. Could be a factor in chronic pain and inflammation. The protein is B1 bradykinin receptor (Bdkrb1) of Mus musculus (Mouse).